Reading from the N-terminus, the 37-residue chain is Dolichyl-diphosphooligosaccharide--protein glycosyltransferase subunit 4B (37 aa).

Residues 1–8 are Lumenal-facing; the sequence is MFDDQDLG. Residues 9–29 traverse the membrane as a helical segment; it reads FFANFLGIFIFVLVMAYHFVM. The Cytoplasmic portion of the chain corresponds to 30 to 37; it reads ADVKYEGN.

It belongs to the OST4 family. Component of the oligosaccharyltransferase (OST) complex.

The protein localises to the endoplasmic reticulum membrane. Its function is as follows. Subunit of the oligosaccharyl transferase (OST) complex that catalyzes the initial transfer of a defined glycan (Glc(3)Man(9)GlcNAc(2) in eukaryotes) from the lipid carrier dolichol-pyrophosphate to an asparagine residue within an Asn-X-Ser/Thr consensus motif in nascent polypeptide chains, the first step in protein N-glycosylation. N-glycosylation occurs cotranslationally and the complex associates with the Sec61 complex at the channel-forming translocon complex that mediates protein translocation across the endoplasmic reticulum (ER). All subunits are required for a maximal enzyme activity. The polypeptide is Dolichyl-diphosphooligosaccharide--protein glycosyltransferase subunit 4B (OST4B) (Oryza sativa subsp. japonica (Rice)).